Consider the following 260-residue polypeptide: Tryptophan 2,3-dioxygenase (260 aa).

Residues 34-38 and R100 each bind substrate; that span reads FIVIH. H219 lines the heme pocket. T233 contributes to the substrate binding site.

This sequence belongs to the tryptophan 2,3-dioxygenase family. As to quaternary structure, homotetramer. Requires heme as cofactor.

The catalysed reaction is L-tryptophan + O2 = N-formyl-L-kynurenine. It participates in amino-acid degradation; L-tryptophan degradation via kynurenine pathway; L-kynurenine from L-tryptophan: step 1/2. Heme-dependent dioxygenase that catalyzes the oxidative cleavage of the L-tryptophan (L-Trp) pyrrole ring and converts L-tryptophan to N-formyl-L-kynurenine. Catalyzes the oxidative cleavage of the indole moiety. This chain is Tryptophan 2,3-dioxygenase, found in Herpetosiphon aurantiacus (strain ATCC 23779 / DSM 785 / 114-95).